Here is a 517-residue protein sequence, read N- to C-terminus: Maturase K (517 aa).

The protein belongs to the intron maturase 2 family. MatK subfamily.

Its subcellular location is the plastid. The protein resides in the chloroplast. In terms of biological role, usually encoded in the trnK tRNA gene intron. Probably assists in splicing its own and other chloroplast group II introns. The polypeptide is Maturase K (Paris tetraphylla).